The following is a 478-amino-acid chain: ATP synthase subunit beta (478 aa).

Position 151-158 (151-158 (GGAGVGKT)) interacts with ATP.

It belongs to the ATPase alpha/beta chains family. In terms of assembly, F-type ATPases have 2 components, CF(1) - the catalytic core - and CF(0) - the membrane proton channel. CF(1) has five subunits: alpha(3), beta(3), gamma(1), delta(1), epsilon(1). CF(0) has three main subunits: a(1), b(2) and c(9-12). The alpha and beta chains form an alternating ring which encloses part of the gamma chain. CF(1) is attached to CF(0) by a central stalk formed by the gamma and epsilon chains, while a peripheral stalk is formed by the delta and b chains.

It is found in the cell inner membrane. The catalysed reaction is ATP + H2O + 4 H(+)(in) = ADP + phosphate + 5 H(+)(out). Produces ATP from ADP in the presence of a proton gradient across the membrane. The catalytic sites are hosted primarily by the beta subunits. The sequence is that of ATP synthase subunit beta from Xanthobacter autotrophicus (strain ATCC BAA-1158 / Py2).